A 172-amino-acid polypeptide reads, in one-letter code: Large ribosomal subunit protein uL10 (172 aa).

The protein belongs to the universal ribosomal protein uL10 family. Part of the ribosomal stalk of the 50S ribosomal subunit. The N-terminus interacts with L11 and the large rRNA to form the base of the stalk. The C-terminus forms an elongated spine to which L12 dimers bind in a sequential fashion forming a multimeric L10(L12)X complex.

Forms part of the ribosomal stalk, playing a central role in the interaction of the ribosome with GTP-bound translation factors. This chain is Large ribosomal subunit protein uL10, found in Methylorubrum populi (strain ATCC BAA-705 / NCIMB 13946 / BJ001) (Methylobacterium populi).